Consider the following 219-residue polypeptide: Transcriptional regulatory protein QseB (219 aa).

Residues 2-116 (RILLIEDDML…EVAARLEALM (115 aa)) enclose the Response regulatory domain. At aspartate 51 the chain carries 4-aspartylphosphate. The ompR/PhoB-type DNA-binding region spans 124–218 (SNELRHGNVM…VHGIGYTLGE (95 aa)).

Phosphorylated by QseC.

It localises to the cytoplasm. Member of a two-component regulatory system QseB/QseC. Activates the flagella regulon by activating transcription of FlhDC. Currently it is not known whether this effect is direct or not. The chain is Transcriptional regulatory protein QseB (qseB) from Escherichia coli O157:H7.